We begin with the raw amino-acid sequence, 183 residues long: Pyruvoyl-dependent arginine decarboxylase 2 (183 aa).

S41 carries the pyruvic acid (Ser) modification.

This sequence belongs to the PdaD family. Pyruvate is required as a cofactor.

The enzyme catalyses L-arginine + H(+) = agmatine + CO2. This is Pyruvoyl-dependent arginine decarboxylase 2 (pdaD2) from Methanosarcina acetivorans (strain ATCC 35395 / DSM 2834 / JCM 12185 / C2A).